The chain runs to 222 residues: Cyclin-dependent kinase inhibitor 3 (222 aa).

The disordered stretch occupies residues 68-101 (KPSSLIEPKQPPRVHRSGIKESGSRSRVDSVNSV). A compositionally biased stretch (basic and acidic residues) spans 85-95 (GIKESGSRSRV).

It belongs to the CDI family. ICK/KRP subfamily. As to quaternary structure, specifically interacts with CDKA-1, but not with CDKB1-1.

The protein resides in the nucleus. The protein localises to the nucleoplasm. Binds and inhibits CYCD2-1/CDKA-1 complex kinase activity. May target specifically CDKA-1. This is Cyclin-dependent kinase inhibitor 3 (KRP3) from Arabidopsis thaliana (Mouse-ear cress).